Here is a 260-residue protein sequence, read N- to C-terminus: Phosphatidylglycerol--prolipoprotein diacylglyceryl transferase (260 aa).

The next 4 membrane-spanning stretches (helical) occupy residues 17–37 (VVKW…SWIF), 52–72 (LTAA…LHVI), 85–105 (IFSG…IGLW), and 113–133 (FNLG…QAIG). Residue Arg134 participates in a 1,2-diacyl-sn-glycero-3-phospho-(1'-sn-glycerol) binding. Helical transmembrane passes span 170–190 (APTQ…SLFI), 198–218 (GQLF…IGFV), and 227–247 (GLEQ…PLFI).

Belongs to the Lgt family.

The protein resides in the cell membrane. It catalyses the reaction L-cysteinyl-[prolipoprotein] + a 1,2-diacyl-sn-glycero-3-phospho-(1'-sn-glycerol) = an S-1,2-diacyl-sn-glyceryl-L-cysteinyl-[prolipoprotein] + sn-glycerol 1-phosphate + H(+). The protein operates within protein modification; lipoprotein biosynthesis (diacylglyceryl transfer). Its function is as follows. Catalyzes the transfer of the diacylglyceryl group from phosphatidylglycerol to the sulfhydryl group of the N-terminal cysteine of a prolipoprotein, the first step in the formation of mature lipoproteins. The sequence is that of Phosphatidylglycerol--prolipoprotein diacylglyceryl transferase from Dehalococcoides mccartyi (strain ATCC BAA-2100 / JCM 16839 / KCTC 5957 / BAV1).